The following is a 460-amino-acid chain: V-type ATP synthase beta chain (460 aa).

It belongs to the ATPase alpha/beta chains family.

Its function is as follows. Produces ATP from ADP in the presence of a proton gradient across the membrane. The V-type beta chain is a regulatory subunit. This Dictyoglomus turgidum (strain DSM 6724 / Z-1310) protein is V-type ATP synthase beta chain.